The primary structure comprises 216 residues: uncharacterized protein (216 aa).

Transmembrane regions (helical) follow at residues 12–32, 48–68, 74–94, 134–154, 156–176, and 191–211; these read YVLG…FVLA, GVFL…ASLL, LFIG…VGML, ILFF…YPGL, FLVL…FLIF, and LAAG…VKLA.

This sequence belongs to the Rht family.

Its subcellular location is the cell membrane. This is an uncharacterized protein from Pseudomonas aeruginosa (strain ATCC 15692 / DSM 22644 / CIP 104116 / JCM 14847 / LMG 12228 / 1C / PRS 101 / PAO1).